An 83-amino-acid chain; its full sequence is Snake venom metalloproteinase BnP1 (83 aa).

One can recognise a Peptidase M12B domain in the interval 8–83; it reads SYIELAVVAD…NPQCIINQPI (76 aa). Glu-11, Cys-77, and Asn-80 together coordinate Ca(2+).

Belongs to the venom metalloproteinase (M12B) family. P-I subfamily. Monomer. Requires Zn(2+) as cofactor. As to expression, expressed by the venom gland.

The protein localises to the secreted. Inhibited by EDTA. This protein is a zinc protease from snake venom that is devoid of significant myotoxic and hemorrhagic activities. It hydrolyzes the Aalpha-chain and more slowly the Bbeta-chain of fibrin and fibrinogen, without affecting the gamma-chains. It induces cell detachment and a apoptosis (anoikis) in endothelial cells. This Bothrops pauloensis (Neuwied's lancehead) protein is Snake venom metalloproteinase BnP1.